The following is a 1005-amino-acid chain: MSALSASLAAAAAAARASETSRESNNVAVTKARPPQHTLVKPAPAKPPRPVARRPKQPVKITVDTSVANTPAPQGSSATSAAAAAARHFKKQKDEQSSPKLSPHHRPPASHRNSGESAKTPSSDSRPASTTSTIPVTPVSATTPSSTVAAAASAAAKRSSTFNKSVPTPVVSDIMKKEQEENRAAAAAAAAQEKATQIIRDLPSPSNSVRSKRLSQSSLVPVLSDEDIYNHRRYARSSQSFATIPTDEDSPGEMGDFEDNNQVHRERARGIQSAAKHANRLSQTSMDSTHTSQQLQPVVSPHTGLPQEGSVLAAALKAGSNASSTMERISLTNEAKEREKAEKRQRKDAKAKAKLLAQANAVYQQSTNESHHAHHHQYHQGNIFKRVIGKSGKPIDPFQGFSPNFSERPGEHFHNHQREMQGAPDGIRRSMDTSRQSIDAPRQSLDAARQSIDTPRELTTNDTSPIPIQPLKSHDAGAVSDLPTSLDEPGLSGHPHLQQSFSNNNALQTVKSSTDDSMSIASLDSVDDSGPGRPPLLAPIPIRNASIIPVSSESESEDIRRGHRRHLSSSQSQRNSLQFPMSPTFSASPAKQLITPEQLLPKRRRGIARTPSVSSSAPRSSSPVISIPLERSSTLQSTLQGSPMNSPVAKSPVFFEGNNGSTNGGLGSSMSNSPPDSELALTPSESTAHSYFAREYREPKSSSTRGVEGASRLAKKLPHRHLAAGGKSIVKSIWNKATPDAPPPPPVSTGGMKTSLRKQPKKKFNEDKPWKHHNDADTLTDADRKRYDGVWATNRGAHVPYYMEPEEYDILIDEEEFYDEGFLSDSDFTDSDSDDDSVSSAEYIMSGENIGNDDVVVSDQNDAVHGYIVSRLWRRSRLPDERLSDIWELVDRCNDGTLDREGFLVGMWLVDQCLYGRKLPNKVDPRVWGSVGRLNVNIKIRQKEPKRNSAKRKARRKVRRDRKELVRERERNEKERRKDEKKEKKDEKKDKKDDRRRDKKRVGEA.

Residues 1 to 18 (MSALSASLAAAAAAARAS) are compositionally biased toward low complexity. 8 disordered regions span residues 1–170 (MSAL…PTPV), 183–219 (RAAAAAAAAQEKATQIIRDLPSPSNSVRSKRLSQSSL), 239–258 (QSFATIPTDEDSPGEMGDFE), 272–350 (QSAA…KDAK), 402–587 (SPNF…TFSA), 602–624 (KRRRGIARTPSVSSSAPRSSSPV), 657–682 (GNNGSTNGGLGSSMSNSPPDSELALT), and 735–776 (NKAT…HNDA). Positions 63–75 (VDTSVANTPAPQG) are enriched in polar residues. A compositionally biased stretch (low complexity) spans 76–86 (SSATSAAAAAA). Polar residues predominate over residues 111–126 (HRNSGESAKTPSSDSR). A compositionally biased stretch (low complexity) spans 127–161 (PASTTSTIPVTPVSATTPSSTVAAAASAAAKRSST). Positions 204–219 (SPSNSVRSKRLSQSSL) are enriched in polar residues. Acidic residues predominate over residues 246 to 258 (TDEDSPGEMGDFE). Polar residues-rich tracts occupy residues 280-297 (RLSQTSMDSTHTSQQLQP) and 320-333 (SNASSTMERISLTN). Over residues 408–419 (RPGEHFHNHQRE) the composition is skewed to basic and acidic residues. Polar residues-rich tracts occupy residues 451–466 (SIDTPRELTTNDTSPI) and 497–522 (LQQSFSNNNALQTVKSSTDDSMSIAS). Low complexity-rich tracts occupy residues 568–578 (SSSQSQRNSLQ) and 608–624 (ARTPSVSSSAPRSSSPV). Residues 763–776 (KFNEDKPWKHHNDA) show a composition bias toward basic and acidic residues. The EH domain maps to 845–934 (MSGENIGNDD…PRVWGSVGRL (90 aa)). The disordered stretch occupies residues 942 to 1005 (QKEPKRNSAK…RRDKKRVGEA (64 aa)). Over residues 948 to 960 (NSAKRKARRKVRR) the composition is skewed to basic residues. Basic and acidic residues predominate over residues 961–1005 (DRKELVRERERNEKERRKDEKKEKKDEKKDKKDDRRRDKKRVGEA).

It belongs to the IRS4 family.

Functionally, positive regulator of phosphatidylinositol 4,5-bisphosphate turnover and negatively regulates signaling through the cell integrity pathway. Involved in rDNA silencing. The protein is Increased rDNA silencing protein 4 (IRS4) of Yarrowia lipolytica (strain CLIB 122 / E 150) (Yeast).